The primary structure comprises 478 residues: Zinc metalloproteinase/disintegrin ussurin (478 aa).

A signal peptide spans 1–20; that stretch reads MIQVLLVTICLAAFPYQGSS. A propeptide spanning residues 21–190 is cleaved from the precursor; sequence IILESGNVND…KKASPLVVTT (170 aa). The Peptidase M12B domain maps to 193–389; it reads RYVELVVVAD…RNPQCILNKP (197 aa). Ca(2+) is bound by residues glutamate 196 and aspartate 280. 3 cysteine pairs are disulfide-bonded: cysteine 304–cysteine 384, cysteine 344–cysteine 368, and cysteine 346–cysteine 351. Histidine 329 contacts Zn(2+). Glutamate 330 is an active-site residue. Positions 333 and 339 each coordinate Zn(2+). The Ca(2+) site is built by cysteine 384 and asparagine 387. The propeptide occupies 390–413; it reads LRTDIVSTPVSGNELLEAGEECDC. The Disintegrin domain occupies 397–478; the sequence is TPVSGNELLE…AGCPRNPFHA (82 aa). 6 disulfide bridges follow: cysteine 411-cysteine 426, cysteine 413-cysteine 421, cysteine 420-cysteine 443, cysteine 434-cysteine 440, cysteine 439-cysteine 464, and cysteine 452-cysteine 471. The Cell attachment site motif lies at 456–458; the sequence is RGD.

It belongs to the venom metalloproteinase (M12B) family. P-II subfamily. P-IIa sub-subfamily. Monomer. Requires Zn(2+) as cofactor. In terms of tissue distribution, expressed by the venom gland.

Its subcellular location is the secreted. Impairs hemostasis in the envenomed animal. Functionally, inhibits platelet aggregation induced by ADP, thrombin, platelet-activating factor and collagen. Acts by inhibiting fibrinogen interaction with platelet receptors GPIIb/GPIIIa (ITGA2B/ITGB3). In Gloydius ussuriensis (Ussuri mamushi), this protein is Zinc metalloproteinase/disintegrin ussurin.